The sequence spans 1770 residues: Transposon Ty2-OR1 Gag-Pol polyprotein (1770 aa).

Polar residues-rich tracts occupy residues 1 to 39 and 49 to 60; these read MESQ…SASN and KVNSQQETTPGT. 2 disordered regions span residues 1-88 and 359-449; these read MESQ…YQQH and QHSE…SNDE. Residues 295 to 397 are RNA-binding; the sequence is ENNINVSDRL…SSKPRAAKAH (103 aa). Residues 369-381 show a composition bias toward low complexity; sequence TSPNTTNTKVTTR. Polar residues-rich tracts occupy residues 399-408 and 415-435; these read IATSSKFSRV and ESTV…GQQQ. The For protease activity; shared with dimeric partner role is filled by Asp457. Positions 579-636 are integrase-type zinc finger-like; that stretch reads NVNKSKSVNKYPYPLIHRMLGHANFRSIQKSLKKNAVTYLKESDIEWSNASTYQCPDC. Residues 656-831 form the Integrase catalytic domain; that stretch reads ESYEPFQYLH…AGLDITTILP (176 aa). The Mg(2+) site is built by Asp667 and Asp732. Composition is skewed to polar residues over residues 916-929, 1009-1024, and 1065-1082; these read FIEQ…YDQN, ESDT…FTAR, and QRNS…STPS. Disordered stretches follow at residues 916–935, 1005–1038, and 1057–1205; these read FIEQ…SDHD, GGTI…MIDL, and GGTE…TEIE. Residues 1193–1227 carry the Bipartite nuclear localization signal motif; it reads KKRSLEDNETEIEVSRDTWNNKNMRSLEPPRSKKR. The Reverse transcriptase Ty1/copia-type domain maps to 1353–1491; that stretch reads NDYYITQLDI…DILGLEIKYQ (139 aa). Residues Asp1361, Asp1442, Asp1443, Asp1625, Glu1667, and Asp1700 each contribute to the Mg(2+) site. Residues 1625–1767 form the RNase H Ty1/copia-type domain; the sequence is DASYGNQPYY…IKTFKLLTNK (143 aa).

The capsid protein forms a homotrimer, from which the VLPs are assembled. The protease is a homodimer, whose active site consists of two apposed aspartic acid residues. Post-translationally, initially, virus-like particles (VLPs) are composed of the structural unprocessed proteins Gag and Gag-Pol, and also contain the host initiator methionine tRNA (tRNA(i)-Met) which serves as a primer for minus-strand DNA synthesis, and a dimer of genomic Ty RNA. Processing of the polyproteins occurs within the particle and proceeds by an ordered pathway, called maturation. First, the protease (PR) is released by autocatalytic cleavage of the Gag-Pol polyprotein, and this cleavage is a prerequisite for subsequent processing at the remaining sites to release the mature structural and catalytic proteins. Maturation takes place prior to the RT reaction and is required to produce transposition-competent VLPs.

The protein localises to the cytoplasm. The protein resides in the nucleus. The catalysed reaction is DNA(n) + a 2'-deoxyribonucleoside 5'-triphosphate = DNA(n+1) + diphosphate. The enzyme catalyses Endonucleolytic cleavage to 5'-phosphomonoester.. Capsid protein (CA) is the structural component of the virus-like particle (VLP), forming the shell that encapsulates the retrotransposons dimeric RNA genome. The particles are assembled from trimer-clustered units and there are holes in the capsid shells that allow for the diffusion of macromolecules. CA also has nucleocapsid-like chaperone activity, promoting primer tRNA(i)-Met annealing to the multipartite primer-binding site (PBS), dimerization of Ty2 RNA and initiation of reverse transcription. Its function is as follows. The aspartyl protease (PR) mediates the proteolytic cleavages of the Gag and Gag-Pol polyproteins after assembly of the VLP. Functionally, reverse transcriptase/ribonuclease H (RT) is a multifunctional enzyme that catalyzes the conversion of the retro-elements RNA genome into dsDNA within the VLP. The enzyme displays a DNA polymerase activity that can copy either DNA or RNA templates, and a ribonuclease H (RNase H) activity that cleaves the RNA strand of RNA-DNA heteroduplexes during plus-strand synthesis and hydrolyzes RNA primers. The conversion leads to a linear dsDNA copy of the retrotransposon that includes long terminal repeats (LTRs) at both ends. In terms of biological role, integrase (IN) targets the VLP to the nucleus, where a subparticle preintegration complex (PIC) containing at least integrase and the newly synthesized dsDNA copy of the retrotransposon must transit the nuclear membrane. Once in the nucleus, integrase performs the integration of the dsDNA into the host genome. This is Transposon Ty2-OR1 Gag-Pol polyprotein (TY2B-OR1) from Saccharomyces cerevisiae (strain ATCC 204508 / S288c) (Baker's yeast).